A 1581-amino-acid chain; its full sequence is Mediator of RNA polymerase II transcription subunit 1 (1581 aa).

Residues 1–670 (MKAQGETEES…YGSSPLERQN (670 aa)) form an interaction with the Mediator complex and THRA region. Residues 16–590 (MSSLLERLHA…SIKDRHESVG (575 aa)) form an interaction with ESR1 region. Interaction with the Mediator complex regions lie at residues 108-212 (FYVE…GYLT) and 215-390 (SGGH…SLQG). Residues 405-644 (PLILNLIRHQ…MAGNTKNHPM (240 aa)) are interaction with THRA. Residues 542–789 (PASSPGYGMT…TDILSDIAEE (248 aa)) are interaction with VDR. Serine 588 is subject to Phosphoserine. The LXXLL motif 1 signature appears at 604–608 (LTSLL). 4 disordered regions span residues 609–705 (QITG…HQTE), 792–820 (KLPS…QSTL), 874–893 (SQSG…GDND), and 948–1566 (EHHS…DFMI). The span at 622-632 (PTPPHHTPPPV) shows a compositional bias: pro residues. The interval 622-701 (PTPPHHTPPP…SSRLPPEKPK (80 aa)) is interaction with PPARGC1A and THRA. The LXXLL motif 2 motif lies at 645 to 649 (LMNLL). The span at 655–675 (QDFSTLYGSSPLERQNSSSGS) shows a compositional bias: polar residues. The tract at residues 656–1066 (DFSTLYGSSP…TPPIPKITIQ (411 aa)) is interaction with ESR1. Serine 664 carries the post-translational modification Phosphoserine. The tract at residues 681–715 (CSGSNKTKKKKSSRLPPEKPKHQTEDDFQRELFSM) is interaction with GATA1. The span at 696–705 (PPEKPKHQTE) shows a compositional bias: basic and acidic residues. Residue serine 795 is modified to Phosphoserine. Phosphothreonine is present on threonine 805. Residues 808-820 (RDSSSSGHSQSTL) are compositionally biased toward polar residues. The Integrase domain-binding motif (IBM) motif lies at 875-902 (QSGFGEEYFDESSQSGDNDDFKGFASQA). A phosphoserine mark is found at serine 887 and serine 953. Residues 963–974 (LGKEKTQKRVKE) show a composition bias toward basic and acidic residues. Threonine 1032 carries the phosphothreonine; by MAPK1 or MAPK3 modification. Low complexity predominate over residues 1034-1045 (PTSTGGSKSPGS). A phosphothreonine mark is found at threonine 1051 and threonine 1057. 2 stretches are compositionally biased toward low complexity: residues 1078–1094 (SSHS…SSGS) and 1101–1156 (SSSS…PGSS). Serine 1156 carries the phosphoserine modification. Residues 1162-1195 (GLSSGSSSTKMKPQGKPSSLMNPSLSKPNISPSH) are compositionally biased toward polar residues. Lysine 1177 is subject to N6-acetyllysine. The residue at position 1207 (serine 1207) is a Phosphoserine. Threonine 1215 carries the post-translational modification Phosphothreonine. Composition is skewed to low complexity over residues 1218 to 1227 (SSKAKSPISS) and 1234 to 1293 (MSGT…SKGK). Serine 1223 is subject to Phosphoserine. The segment at 1249–1421 (LGSSGSLSQK…KPGESSGEGL (173 aa)) is interaction with TP53. Residue serine 1302 is modified to Phosphoserine. A compositionally biased stretch (polar residues) spans 1330 to 1345 (GVSTNSSSHPMSSKHN). Serine 1347 carries the phosphoserine modification. Residues 1352–1364 (QGKREKSDKDKSK) show a composition bias toward basic and acidic residues. Phosphoserine is present on residues serine 1403 and serine 1433. Polar residues-rich tracts occupy residues 1425–1440 (MASS…SGST) and 1448–1482 (PSHS…SPSS). A Phosphothreonine modification is found at threonine 1440. Residue threonine 1457 is modified to Phosphothreonine; by MAPK1 or MAPK3. Phosphoserine is present on residues serine 1463, serine 1465, serine 1479, serine 1481, and serine 1482. The span at 1496 to 1505 (KHKKHKKEKK) shows a compositional bias: basic residues. Over residues 1506–1522 (KVKDKDRDRDRDKDRDK) the composition is skewed to basic and acidic residues. An N6-acetyllysine modification is found at lysine 1529. Over residues 1533 to 1552 (WSKSPISSDQSLSMTSNTIL) the composition is skewed to polar residues.

The protein belongs to the Mediator complex subunit 1 family. As to quaternary structure, component of the Mediator complex, which is composed of MED1, MED4, MED6, MED7, MED8, MED9, MED10, MED11, MED12, MED13, MED13L, MED14, MED15, MED16, MED17, MED18, MED19, MED20, MED21, MED22, MED23, MED24, MED25, MED26, MED27, MED29, MED30, MED31, CCNC, CDK8 and CDC2L6/CDK11. The MED12, MED13, CCNC and CDK8 subunits form a distinct module termed the CDK8 module. Mediator containing the CDK8 module is less active than Mediator lacking this module in supporting transcriptional activation. Individual preparations of the Mediator complex lacking one or more distinct subunits have been variously termed ARC, CRSP, DRIP, PC2, SMCC and TRAP. This subunit specifically interacts with a number of nuclear receptors in a ligand-dependent fashion including AR, ESR1, ESR2, PPARA, PPARG, RORA, RXRA, RXRG, THRA, THRB and VDR. Interacts with CTNNB1, GABPA, GLI3, PPARGC1A and TP53. Interacts with YWHAH. Interacts with CLOCK; this interaction requires the presence of THRAP3. Interacts with GATA1 and CCAR1. Interacts with NR4A3. Interacts (via IBM motif) with PSIP1 (via IBD domain); phosphorylation increases its affinity for PSIP1. Interacts with USP22. Post-translationally, phosphorylated by MAPK1 or MAPK3 during G2/M phase which may enhance protein stability and promote entry into the nucleolus. Phosphorylation increases its interaction with PSIP1. As to expression, ubiquitously expressed.

It localises to the nucleus. In terms of biological role, component of the Mediator complex, a coactivator involved in the regulated transcription of nearly all RNA polymerase II-dependent genes. Mediator functions as a bridge to convey information from gene-specific regulatory proteins to the basal RNA polymerase II transcription machinery. Mediator is recruited to promoters by direct interactions with regulatory proteins and serves as a scaffold for the assembly of a functional preinitiation complex with RNA polymerase II and the general transcription factors. Acts as a coactivator for GATA1-mediated transcriptional activation during erythroid differentiation of K562 erythroleukemia cells. In Homo sapiens (Human), this protein is Mediator of RNA polymerase II transcription subunit 1 (MED1).